The sequence spans 431 residues: Protoheme IX farnesyltransferase, mitochondrial (431 aa).

The transit peptide at 1 to 33 (MWRRSVVYRFSSRISVSSSLPNPRLIPWSRELC) directs the protein to the mitochondrion. Helical transmembrane passes span 109–129 (LVVA…AISF), 131–153 (GLCY…NQIF), 174–194 (ISVP…ACLL), 200–220 (MLAA…YTPL), 226–246 (INTW…WAAA), 255–275 (MILP…LAHL), 298–317 (IAAV…FIAY), 322–344 (TSSW…AFSF), and 356–376 (MFHA…LHRV).

It belongs to the ubiA prenyltransferase (TC 3.D.4.8) family.

The protein localises to the mitochondrion inner membrane. The catalysed reaction is heme b + (2E,6E)-farnesyl diphosphate + H2O = Fe(II)-heme o + diphosphate. Its function is as follows. Converts protoheme IX and farnesyl diphosphate to heme O. The protein is Protoheme IX farnesyltransferase, mitochondrial (COX10) of Arabidopsis thaliana (Mouse-ear cress).